Reading from the N-terminus, the 316-residue chain is Acetaldehyde dehydrogenase (316 aa).

Residue 11–14 coordinates NAD(+); that stretch reads SGNI. The active-site Acyl-thioester intermediate is Cys-131. Residues 162 to 170 and Asn-289 contribute to the NAD(+) site; that span reads SAGPGTRAN.

Belongs to the acetaldehyde dehydrogenase family. As to quaternary structure, interacts with MhpE.

The catalysed reaction is acetaldehyde + NAD(+) + CoA = acetyl-CoA + NADH + H(+). It functions in the pathway aromatic compound metabolism; 3-phenylpropanoate degradation. In terms of biological role, catalyzes the conversion of acetaldehyde to acetyl-CoA, using NAD(+) and coenzyme A. Is the final enzyme in the meta-cleavage pathway for the degradation of aromatic compounds. This Escherichia coli O157:H7 protein is Acetaldehyde dehydrogenase.